We begin with the raw amino-acid sequence, 321 residues long: CPX chromosomal region candidate gene 1 protein homolog (321 aa).

A disordered region spans residues 1 to 83; the sequence is MSSPTKEGSD…TEIQKDQREE (83 aa). 2 stretches are compositionally biased toward polar residues: residues 21-32 and 44-60; these read NEPSNDCTTDIE and VETN…TSQE.

In Macaca fascicularis (Crab-eating macaque), this protein is CPX chromosomal region candidate gene 1 protein homolog (CPXCR1).